The primary structure comprises 700 residues: Polyphosphate kinase (700 aa).

Asn-45 lines the ATP pocket. Mg(2+) is bound by residues Arg-373 and Arg-403. The PLD phosphodiesterase 1 domain maps to 428 to 462 (PGMKIHAKLLLITRREEQGFVRYAHIGTGNFHERT). The active-site Phosphohistidine intermediate is His-433. ATP is bound by residues Tyr-466, Arg-562, and His-590. One can recognise a PLD phosphodiesterase 2 domain in the interval 585-615 (DRFLEHPRVLVVHNDGDPQVFISSADWMERN).

The protein belongs to the polyphosphate kinase 1 (PPK1) family. Mg(2+) is required as a cofactor. An intermediate of this reaction is the autophosphorylated ppk in which a phosphate is covalently linked to a histidine residue through a N-P bond.

It carries out the reaction [phosphate](n) + ATP = [phosphate](n+1) + ADP. Catalyzes the reversible transfer of the terminal phosphate of ATP to form a long-chain polyphosphate (polyP). This chain is Polyphosphate kinase, found in Vibrio vulnificus (strain YJ016).